We begin with the raw amino-acid sequence, 396 residues long: 1-deoxy-D-xylulose 5-phosphate reductoisomerase (396 aa).

Residues threonine 15, glycine 16, isoleucine 18, and asparagine 127 each coordinate NADPH. Lysine 128 is a 1-deoxy-D-xylulose 5-phosphate binding site. Glutamate 129 provides a ligand contact to NADPH. Aspartate 153 contacts Mn(2+). 4 residues coordinate 1-deoxy-D-xylulose 5-phosphate: serine 154, glutamate 155, serine 177, and histidine 200. A Mn(2+)-binding site is contributed by glutamate 155. Glycine 206 provides a ligand contact to NADPH. 4 residues coordinate 1-deoxy-D-xylulose 5-phosphate: serine 213, asparagine 218, lysine 219, and glutamate 222. Glutamate 222 provides a ligand contact to Mn(2+).

The protein belongs to the DXR family. Mg(2+) is required as a cofactor. The cofactor is Mn(2+).

The enzyme catalyses 2-C-methyl-D-erythritol 4-phosphate + NADP(+) = 1-deoxy-D-xylulose 5-phosphate + NADPH + H(+). It functions in the pathway isoprenoid biosynthesis; isopentenyl diphosphate biosynthesis via DXP pathway; isopentenyl diphosphate from 1-deoxy-D-xylulose 5-phosphate: step 1/6. In terms of biological role, catalyzes the NADPH-dependent rearrangement and reduction of 1-deoxy-D-xylulose-5-phosphate (DXP) to 2-C-methyl-D-erythritol 4-phosphate (MEP). This Anaplasma marginale (strain Florida) protein is 1-deoxy-D-xylulose 5-phosphate reductoisomerase.